A 216-amino-acid polypeptide reads, in one-letter code: N-(5'-phosphoribosyl)anthranilate isomerase (216 aa).

Belongs to the TrpF family.

The enzyme catalyses N-(5-phospho-beta-D-ribosyl)anthranilate = 1-(2-carboxyphenylamino)-1-deoxy-D-ribulose 5-phosphate. It participates in amino-acid biosynthesis; L-tryptophan biosynthesis; L-tryptophan from chorismate: step 3/5. This chain is N-(5'-phosphoribosyl)anthranilate isomerase, found in Methanopyrus kandleri (strain AV19 / DSM 6324 / JCM 9639 / NBRC 100938).